A 231-amino-acid chain; its full sequence is 7-cyano-7-deazaguanine synthase (231 aa).

8 to 18 (LSGGLDSATAA) contributes to the ATP binding site. Residues C189, C197, C200, and C203 each coordinate Zn(2+).

Belongs to the QueC family. Zn(2+) serves as cofactor.

The enzyme catalyses 7-carboxy-7-deazaguanine + NH4(+) + ATP = 7-cyano-7-deazaguanine + ADP + phosphate + H2O + H(+). It participates in purine metabolism; 7-cyano-7-deazaguanine biosynthesis. Its function is as follows. Catalyzes the ATP-dependent conversion of 7-carboxy-7-deazaguanine (CDG) to 7-cyano-7-deazaguanine (preQ(0)). In Synechococcus elongatus (strain ATCC 33912 / PCC 7942 / FACHB-805) (Anacystis nidulans R2), this protein is 7-cyano-7-deazaguanine synthase.